We begin with the raw amino-acid sequence, 524 residues long: Probable cytochrome P450 519C1 (524 aa).

The helical transmembrane segment at 1 to 21 threads the bilayer; the sequence is MNILLLIFYFLVCFLIFDFIK. Residue cysteine 470 participates in heme binding.

Belongs to the cytochrome P450 family. Requires heme as cofactor.

The protein resides in the membrane. This is Probable cytochrome P450 519C1 (cyp519C1) from Dictyostelium discoideum (Social amoeba).